The following is a 467-amino-acid chain: Glycogen synthase (467 aa).

Lys-16 contributes to the ADP-alpha-D-glucose binding site.

Belongs to the glycosyltransferase 1 family. Bacterial/plant glycogen synthase subfamily.

The enzyme catalyses [(1-&gt;4)-alpha-D-glucosyl](n) + ADP-alpha-D-glucose = [(1-&gt;4)-alpha-D-glucosyl](n+1) + ADP + H(+). It functions in the pathway glycan biosynthesis; glycogen biosynthesis. Its function is as follows. Synthesizes alpha-1,4-glucan chains using ADP-glucose. The chain is Glycogen synthase from Paracoccus denitrificans (strain Pd 1222).